The sequence spans 340 residues: Phosphoribosylformylglycinamidine cyclo-ligase (340 aa).

The protein belongs to the AIR synthase family.

Its subcellular location is the cytoplasm. The catalysed reaction is 2-formamido-N(1)-(5-O-phospho-beta-D-ribosyl)acetamidine + ATP = 5-amino-1-(5-phospho-beta-D-ribosyl)imidazole + ADP + phosphate + H(+). Its pathway is purine metabolism; IMP biosynthesis via de novo pathway; 5-amino-1-(5-phospho-D-ribosyl)imidazole from N(2)-formyl-N(1)-(5-phospho-D-ribosyl)glycinamide: step 2/2. The protein is Phosphoribosylformylglycinamidine cyclo-ligase of Streptococcus pneumoniae serotype 4 (strain ATCC BAA-334 / TIGR4).